A 465-amino-acid polypeptide reads, in one-letter code: Endolysin PlyC, large catalytic subunit (465 aa).

The segment at 2-205 (SKKYTQQQYE…GADPFTGGSI (204 aa)) is glycosidase activity. Disordered regions lie at residues 204–226 (SITG…ASSE) and 289–309 (TNPN…LGSG). 2 stretches are compositionally biased toward polar residues: residues 213 to 226 (SVGT…ASSE) and 289 to 307 (TNPN…NDLG). Residues 308-465 (SGSDRVAANL…STLTGLITFK (158 aa)) form the Peptidase C51 domain. Catalysis depends on for amidase activity residues Cys-333 and His-420.

As to quaternary structure, part of the PlyC holoenzyme, which is composed of 1 PlyCA and 8 PlyCB assembled as a ring.

It catalyses the reaction Hydrolyzes the link between N-acetylmuramoyl residues and L-amino acid residues in certain cell-wall glycopeptides.. Its function is as follows. Component of the endolysin PlyC that degrades the host peptidoglycans and participates with the holin protein in the sequential events which lead to the programmed host cell lysis releasing the mature viral particles. Once the holin has permeabilized the host cell membrane, the endolysin can reach the periplasm and breaking down the peptidoglycan layer. When associated with the small subunit PlyCB, the large subunit PlyCA displays 2 catalytic activities, amidase and glycosyl hydrolase. Cleaves the amide bond between N-acetyl muramic acid and L-alanine in the host peptidoglycan. PlyC is an extremely potent endolysin. The protein is Endolysin PlyC, large catalytic subunit (orf11) of Streptococcus phage C1.